The sequence spans 110 residues: Flowering-promoting factor 1 (110 aa).

Belongs to the FPF1 family.

In terms of biological role, modulates the competence to flowering of apical meristems. Involved in a GA-dependent response in apical meristems during the transition to flowering. This is Flowering-promoting factor 1 (FPF1) from Arabidopsis thaliana (Mouse-ear cress).